An 80-amino-acid chain; its full sequence is Protein P9 (80 aa).

Self-associates.

In Beta vulgaris (Sugar beet), this protein is Protein P9.